A 459-amino-acid polypeptide reads, in one-letter code: Bifunctional protein GlmU (459 aa).

The pyrophosphorylase stretch occupies residues 1–230; sequence MSNRFAVILA…FDETLGVNDR (230 aa). UDP-N-acetyl-alpha-D-glucosamine is bound by residues 9 to 12, lysine 23, glutamine 73, and 78 to 79; these read LAAG and GT. A Mg(2+)-binding site is contributed by aspartate 103. Residues glycine 140, glutamate 155, asparagine 170, and asparagine 228 each coordinate UDP-N-acetyl-alpha-D-glucosamine. Residue asparagine 228 coordinates Mg(2+). The interval 231-251 is linker; that stretch reads VALSQAEIIMKNRINRKNMVN. Positions 252-459 are N-acetyltransferase; sequence GVTIIDPSNT…VDQLLNKKKS (208 aa). Positions 333 and 351 each coordinate UDP-N-acetyl-alpha-D-glucosamine. The Proton acceptor role is filled by histidine 363. 2 residues coordinate UDP-N-acetyl-alpha-D-glucosamine: tyrosine 366 and asparagine 377. Acetyl-CoA-binding positions include 386–387, alanine 423, and arginine 440; that span reads NY.

This sequence in the N-terminal section; belongs to the N-acetylglucosamine-1-phosphate uridyltransferase family. It in the C-terminal section; belongs to the transferase hexapeptide repeat family. Homotrimer. Mg(2+) serves as cofactor.

The protein localises to the cytoplasm. The enzyme catalyses alpha-D-glucosamine 1-phosphate + acetyl-CoA = N-acetyl-alpha-D-glucosamine 1-phosphate + CoA + H(+). It catalyses the reaction N-acetyl-alpha-D-glucosamine 1-phosphate + UTP + H(+) = UDP-N-acetyl-alpha-D-glucosamine + diphosphate. It participates in nucleotide-sugar biosynthesis; UDP-N-acetyl-alpha-D-glucosamine biosynthesis; N-acetyl-alpha-D-glucosamine 1-phosphate from alpha-D-glucosamine 6-phosphate (route II): step 2/2. The protein operates within nucleotide-sugar biosynthesis; UDP-N-acetyl-alpha-D-glucosamine biosynthesis; UDP-N-acetyl-alpha-D-glucosamine from N-acetyl-alpha-D-glucosamine 1-phosphate: step 1/1. Its pathway is bacterial outer membrane biogenesis; LPS lipid A biosynthesis. In terms of biological role, catalyzes the last two sequential reactions in the de novo biosynthetic pathway for UDP-N-acetylglucosamine (UDP-GlcNAc). The C-terminal domain catalyzes the transfer of acetyl group from acetyl coenzyme A to glucosamine-1-phosphate (GlcN-1-P) to produce N-acetylglucosamine-1-phosphate (GlcNAc-1-P), which is converted into UDP-GlcNAc by the transfer of uridine 5-monophosphate (from uridine 5-triphosphate), a reaction catalyzed by the N-terminal domain. The sequence is that of Bifunctional protein GlmU from Bacillus cereus (strain G9842).